Consider the following 426-residue polypeptide: tRNA methyltransferase 10 homolog C (426 aa).

The N-terminal 41 residues, 1–41 (MPVLLKMSVSITFLRPFARVLVPFTLHRKRRVLYSTIMQRY), are a transit peptide targeting the mitochondrion. A Phosphoserine modification is found at serine 86. Residues 138–166 (LYIKEKMKKARQIKKEMKKAEKEEPKKDQ) adopt a coiled-coil conformation. An SAM-dependent MTase TRM10-type domain is found at 193–385 (MGWKGAQAMQ…KFVPSRKHAG (193 aa)).

This sequence belongs to the class IV-like SAM-binding methyltransferase superfamily. TRM10 family. In terms of assembly, component of mitochondrial ribonuclease P, a complex composed of TRMT10C/MRPP1, HSD17B10/MRPP2 and PRORP/MRPP3. Interacts with HSD17B10/MRPP2; forming the MRPP1-MRPP2 subcomplex of the mitochondrial ribonuclease P complex. Interacts with GRSF1.

It localises to the mitochondrion matrix. It is found in the mitochondrion nucleoid. The enzyme catalyses adenosine(9) in tRNA + S-adenosyl-L-methionine = N(1)-methyladenosine(9) in tRNA + S-adenosyl-L-homocysteine + H(+). It catalyses the reaction guanosine(9) in tRNA + S-adenosyl-L-methionine = N(1)-methylguanosine(9) in tRNA + S-adenosyl-L-homocysteine + H(+). The catalysed reaction is an adenosine in mRNA + S-adenosyl-L-methionine = an N(1)-methyladenosine in mRNA + S-adenosyl-L-homocysteine + H(+). Functionally, mitochondrial tRNA N(1)-methyltransferase involved in mitochondrial tRNA maturation. Component of mitochondrial ribonuclease P, a complex composed of TRMT10C/MRPP1, HSD17B10/MRPP2 and PRORP/MRPP3, which cleaves tRNA molecules in their 5'-ends. Together with HSD17B10/MRPP2, forms a subcomplex of the mitochondrial ribonuclease P, named MRPP1-MRPP2 subcomplex, which displays functions that are independent of the ribonuclease P activity. The MRPP1-MRPP2 subcomplex catalyzes the formation of N(1)-methylguanine and N(1)-methyladenine at position 9 (m1G9 and m1A9, respectively) in tRNAs; TRMT10C/MRPP1 acting as the catalytic N(1)-methyltransferase subunit. The MRPP1-MRPP2 subcomplex also acts as a tRNA maturation platform: following 5'-end cleavage by the mitochondrial ribonuclease P complex, the MRPP1-MRPP2 subcomplex enhances the efficiency of 3'-processing catalyzed by ELAC2, retains the tRNA product after ELAC2 processing and presents the nascent tRNA to the mitochondrial CCA tRNA nucleotidyltransferase TRNT1 enzyme. In addition to tRNA N(1)-methyltransferase activity, TRMT10C/MRPP1 also acts as a mRNA N(1)-methyltransferase by mediating methylation of adenosine residues at the N(1) position of MT-ND5 mRNA. Associates with mitochondrial DNA complexes at the nucleoids to initiate RNA processing and ribosome assembly. This is tRNA methyltransferase 10 homolog C from Bos taurus (Bovine).